We begin with the raw amino-acid sequence, 119 residues long: Ribonuclease P protein component (119 aa).

It belongs to the RnpA family. Consists of a catalytic RNA component (M1 or rnpB) and a protein subunit.

The enzyme catalyses Endonucleolytic cleavage of RNA, removing 5'-extranucleotides from tRNA precursor.. RNaseP catalyzes the removal of the 5'-leader sequence from pre-tRNA to produce the mature 5'-terminus. It can also cleave other RNA substrates such as 4.5S RNA. The protein component plays an auxiliary but essential role in vivo by binding to the 5'-leader sequence and broadening the substrate specificity of the ribozyme. The protein is Ribonuclease P protein component of Streptococcus equi subsp. equi (strain 4047).